Here is a 184-residue protein sequence, read N- to C-terminus: ATP synthase subunit b, chloroplastic (184 aa).

Residues 27–49 traverse the membrane as a helical segment; the sequence is LATNPINLSVVFGVLIFFGKGVL.

The protein belongs to the ATPase B chain family. In terms of assembly, F-type ATPases have 2 components, F(1) - the catalytic core - and F(0) - the membrane proton channel. F(1) has five subunits: alpha(3), beta(3), gamma(1), delta(1), epsilon(1). F(0) has four main subunits: a(1), b(1), b'(1) and c(10-14). The alpha and beta chains form an alternating ring which encloses part of the gamma chain. F(1) is attached to F(0) by a central stalk formed by the gamma and epsilon chains, while a peripheral stalk is formed by the delta, b and b' chains.

The protein resides in the plastid. It localises to the chloroplast thylakoid membrane. Functionally, f(1)F(0) ATP synthase produces ATP from ADP in the presence of a proton or sodium gradient. F-type ATPases consist of two structural domains, F(1) containing the extramembraneous catalytic core and F(0) containing the membrane proton channel, linked together by a central stalk and a peripheral stalk. During catalysis, ATP synthesis in the catalytic domain of F(1) is coupled via a rotary mechanism of the central stalk subunits to proton translocation. Component of the F(0) channel, it forms part of the peripheral stalk, linking F(1) to F(0). This is ATP synthase subunit b, chloroplastic from Arabis hirsuta (Hairy rock-cress).